We begin with the raw amino-acid sequence, 639 residues long: Chaperone protein DnaK (639 aa).

T198 is modified (phosphothreonine; by autocatalysis). The disordered stretch occupies residues 605-624; it reads SQAQGGAETNAGKQANAAAD.

This sequence belongs to the heat shock protein 70 family.

Acts as a chaperone. In Shewanella putrefaciens (strain CN-32 / ATCC BAA-453), this protein is Chaperone protein DnaK.